The chain runs to 221 residues: MGPVPEEHQRESETVASNGANESGAAVTGIPQREAKHVSGTAVSGLAKRYASALYSYAGDSGDLDGVIARIEALGRLIDESADLRSLLGSPLVDVNRARDAVLAVLDRQGFTRIERNFVGTVANNRRLGSLRSIISAFAVLVAEKRGEAVAVVESAHELTEVQEHQLRASLIEAGYGNVRIEKHVDPSLLGGLVVRIGTRLYDTSLKSRLQRLQYAMKGAA.

The span at methionine 1–glutamate 13 shows a compositional bias: basic and acidic residues. Positions methionine 1–proline 31 are disordered.

This sequence belongs to the ATPase delta chain family. F-type ATPases have 2 components, F(1) - the catalytic core - and F(0) - the membrane proton channel. F(1) has five subunits: alpha(3), beta(3), gamma(1), delta(1), epsilon(1). F(0) has three main subunits: a(1), b(2) and c(10-14). The alpha and beta chains form an alternating ring which encloses part of the gamma chain. F(1) is attached to F(0) by a central stalk formed by the gamma and epsilon chains, while a peripheral stalk is formed by the delta and b chains.

The protein localises to the cell inner membrane. Functionally, f(1)F(0) ATP synthase produces ATP from ADP in the presence of a proton or sodium gradient. F-type ATPases consist of two structural domains, F(1) containing the extramembraneous catalytic core and F(0) containing the membrane proton channel, linked together by a central stalk and a peripheral stalk. During catalysis, ATP synthesis in the catalytic domain of F(1) is coupled via a rotary mechanism of the central stalk subunits to proton translocation. Its function is as follows. This protein is part of the stalk that links CF(0) to CF(1). It either transmits conformational changes from CF(0) to CF(1) or is implicated in proton conduction. The sequence is that of ATP synthase subunit delta from Granulibacter bethesdensis (strain ATCC BAA-1260 / CGDNIH1).